A 474-amino-acid chain; its full sequence is Bifunctional protein HldE (474 aa).

Positions 1-318 (MKLSMPRFDQ…RAVQREQGSE (318 aa)) are ribokinase. Residue 194–197 (NLSE) participates in ATP binding. The active site involves Asp263. Positions 343–474 (FTNGCFDILH…AIVEKIRQKG (132 aa)) are cytidylyltransferase.

The protein in the N-terminal section; belongs to the carbohydrate kinase PfkB family. In the C-terminal section; belongs to the cytidylyltransferase family. In terms of assembly, homodimer.

The catalysed reaction is D-glycero-beta-D-manno-heptose 7-phosphate + ATP = D-glycero-beta-D-manno-heptose 1,7-bisphosphate + ADP + H(+). It carries out the reaction D-glycero-beta-D-manno-heptose 1-phosphate + ATP + H(+) = ADP-D-glycero-beta-D-manno-heptose + diphosphate. It functions in the pathway nucleotide-sugar biosynthesis; ADP-L-glycero-beta-D-manno-heptose biosynthesis; ADP-L-glycero-beta-D-manno-heptose from D-glycero-beta-D-manno-heptose 7-phosphate: step 1/4. It participates in nucleotide-sugar biosynthesis; ADP-L-glycero-beta-D-manno-heptose biosynthesis; ADP-L-glycero-beta-D-manno-heptose from D-glycero-beta-D-manno-heptose 7-phosphate: step 3/4. Catalyzes the phosphorylation of D-glycero-D-manno-heptose 7-phosphate at the C-1 position to selectively form D-glycero-beta-D-manno-heptose-1,7-bisphosphate. In terms of biological role, catalyzes the ADP transfer from ATP to D-glycero-beta-D-manno-heptose 1-phosphate, yielding ADP-D-glycero-beta-D-manno-heptose. The sequence is that of Bifunctional protein HldE from Pseudomonas aeruginosa (strain UCBPP-PA14).